The chain runs to 424 residues: Serine--tRNA ligase (424 aa).

Positions 109–129 (QEDVPYGESEEDNREERKWGD) are disordered. An L-serine-binding site is contributed by 231–233 (TAE). ATP is bound at residue 262-264 (RSE). An L-serine-binding site is contributed by Glu-285. 349 to 352 (EISS) contributes to the ATP binding site. Position 385 (Ser-385) interacts with L-serine.

This sequence belongs to the class-II aminoacyl-tRNA synthetase family. Type-1 seryl-tRNA synthetase subfamily. As to quaternary structure, homodimer. The tRNA molecule binds across the dimer.

Its subcellular location is the cytoplasm. It carries out the reaction tRNA(Ser) + L-serine + ATP = L-seryl-tRNA(Ser) + AMP + diphosphate + H(+). The enzyme catalyses tRNA(Sec) + L-serine + ATP = L-seryl-tRNA(Sec) + AMP + diphosphate + H(+). It participates in aminoacyl-tRNA biosynthesis; selenocysteinyl-tRNA(Sec) biosynthesis; L-seryl-tRNA(Sec) from L-serine and tRNA(Sec): step 1/1. In terms of biological role, catalyzes the attachment of serine to tRNA(Ser). Is also able to aminoacylate tRNA(Sec) with serine, to form the misacylated tRNA L-seryl-tRNA(Sec), which will be further converted into selenocysteinyl-tRNA(Sec). The protein is Serine--tRNA ligase of Shouchella clausii (strain KSM-K16) (Alkalihalobacillus clausii).